The primary structure comprises 316 residues: 33 kDa chaperonin (316 aa).

Intrachain disulfides connect Cys-239–Cys-241 and Cys-272–Cys-275.

It belongs to the HSP33 family. Under oxidizing conditions two disulfide bonds are formed involving the reactive cysteines. Under reducing conditions zinc is bound to the reactive cysteines and the protein is inactive.

The protein localises to the cytoplasm. Functionally, redox regulated molecular chaperone. Protects both thermally unfolding and oxidatively damaged proteins from irreversible aggregation. Plays an important role in the bacterial defense system toward oxidative stress. The polypeptide is 33 kDa chaperonin (Clostridium perfringens (strain SM101 / Type A)).